The following is a 246-amino-acid chain: Small ribosomal subunit protein uS2 (246 aa).

This sequence belongs to the universal ribosomal protein uS2 family.

This chain is Small ribosomal subunit protein uS2, found in Pseudomonas paraeruginosa (strain DSM 24068 / PA7) (Pseudomonas aeruginosa (strain PA7)).